Reading from the N-terminus, the 378-residue chain is DNA primase small subunit PriS (378 aa).

Active-site residues include aspartate 98, aspartate 100, and aspartate 282.

It belongs to the eukaryotic-type primase small subunit family. As to quaternary structure, heterodimer of a small subunit (PriS) and a large subunit (PriL). Mg(2+) serves as cofactor. Mn(2+) is required as a cofactor.

In terms of biological role, catalytic subunit of DNA primase, an RNA polymerase that catalyzes the synthesis of short RNA molecules used as primers for DNA polymerase during DNA replication. The small subunit contains the primase catalytic core and has DNA synthesis activity on its own. Binding to the large subunit stabilizes and modulates the activity, increasing the rate of DNA synthesis while decreasing the length of the DNA fragments, and conferring RNA synthesis capability. The DNA polymerase activity may enable DNA primase to also catalyze primer extension after primer synthesis. May also play a role in DNA repair. The chain is DNA primase small subunit PriS from Methanosphaerula palustris (strain ATCC BAA-1556 / DSM 19958 / E1-9c).